The sequence spans 396 residues: S-arrestin (396 aa).

The segment covering 375-386 (ARDPLKGELQAE) has biased composition (basic and acidic residues). Residues 375 to 396 (ARDPLKGELQAEEKEEEEDDEK) are disordered. Residues 387–396 (EKEEEEDDEK) show a composition bias toward acidic residues.

The protein belongs to the arrestin family. Interacts with RHO (via the phosphorylated C-terminus).

It is found in the cell projection. The protein resides in the cilium. It localises to the photoreceptor outer segment. The protein localises to the membrane. Its function is as follows. Binds to photoactivated, phosphorylated RHO and terminates RHO signaling via G-proteins by competing with G-proteins for the same binding site on RHO. May play a role in preventing light-dependent degeneration of retinal photoreceptor cells. The chain is S-arrestin (sag) from Xenopus laevis (African clawed frog).